Consider the following 461-residue polypeptide: Porin AaxA (461 aa).

Positions 1–22 (MSFRSVLLTALLSLSFTTTMQA) are cleaved as a signal peptide.

It belongs to the OprB family.

Its subcellular location is the cell outer membrane. Facilitates L-arginine uptake, as part of the AaxABC system. The arginine uptake by the bacterium in the macrophage may be a virulence factor against the host innate immune response. This Chlamydia trachomatis serovar D (strain ATCC VR-885 / DSM 19411 / UW-3/Cx) protein is Porin AaxA (aaxA).